Reading from the N-terminus, the 132-residue chain is Small ribosomal subunit protein uS9 (132 aa).

The protein belongs to the universal ribosomal protein uS9 family.

The polypeptide is Small ribosomal subunit protein uS9 (rpsI) (Mycoplasma genitalium (strain ATCC 33530 / DSM 19775 / NCTC 10195 / G37) (Mycoplasmoides genitalium)).